The primary structure comprises 208 residues: Large ribosomal subunit protein bL25 (208 aa).

The segment covering 186–201 has biased composition (low complexity); that stretch reads PAGEKSAAAEEGAAAA. A disordered region spans residues 186-208; sequence PAGEKSAAAEEGAAAAGEDKPAA.

The protein belongs to the bacterial ribosomal protein bL25 family. CTC subfamily. As to quaternary structure, part of the 50S ribosomal subunit; part of the 5S rRNA/L5/L18/L25 subcomplex. Contacts the 5S rRNA. Binds to the 5S rRNA independently of L5 and L18.

This is one of the proteins that binds to the 5S RNA in the ribosome where it forms part of the central protuberance. In Ralstonia pickettii (strain 12J), this protein is Large ribosomal subunit protein bL25.